A 387-amino-acid chain; its full sequence is Bifunctional chorismate mutase/prephenate dehydratase (387 aa).

One can recognise a Chorismate mutase domain in the interval 1-92; the sequence is MNPDNPLLAL…DSVLTQQALL (92 aa). Substrate contacts are provided by Arg-11, Arg-28, Lys-39, Asp-48, Glu-52, Ser-84, and Gln-88. The Prephenate dehydratase domain maps to 105–285; sequence RIAFLGPKGS…NHTRFIVLAR (181 aa). The region spanning 299–376 is the ACT domain; it reads TLIMATGQQA…RSLKVLGCYP (78 aa).

The protein localises to the cytoplasm. The catalysed reaction is chorismate = prephenate. It catalyses the reaction prephenate + H(+) = 3-phenylpyruvate + CO2 + H2O. It functions in the pathway amino-acid biosynthesis; L-phenylalanine biosynthesis; phenylpyruvate from prephenate: step 1/1. Its pathway is metabolic intermediate biosynthesis; prephenate biosynthesis; prephenate from chorismate: step 1/1. Catalyzes the Claisen rearrangement of chorismate to prephenate and the decarboxylation/dehydration of prephenate to phenylpyruvate. The chain is Bifunctional chorismate mutase/prephenate dehydratase (pheA) from Enterobacter agglomerans (Erwinia herbicola).